Consider the following 562-residue polypeptide: Protein FAM222B (562 aa).

Composition is skewed to low complexity over residues 147-167 (PQAQALARQQALQHAQTLAHA) and 183-201 (ALSHPQSLQQPQGLGHPQQ). Disordered regions lie at residues 147-242 (PQAQ…PPNV) and 537-562 (AHRAPGTRAPDPTDSRSLHIQHPGYR).

The protein belongs to the FAM222 family.

The polypeptide is Protein FAM222B (Fam222b) (Mus musculus (Mouse)).